Consider the following 886-residue polypeptide: Alanine--tRNA ligase (886 aa).

His570, His574, Cys672, and His676 together coordinate Zn(2+).

This sequence belongs to the class-II aminoacyl-tRNA synthetase family. Requires Zn(2+) as cofactor.

It localises to the cytoplasm. It carries out the reaction tRNA(Ala) + L-alanine + ATP = L-alanyl-tRNA(Ala) + AMP + diphosphate. Its function is as follows. Catalyzes the attachment of alanine to tRNA(Ala) in a two-step reaction: alanine is first activated by ATP to form Ala-AMP and then transferred to the acceptor end of tRNA(Ala). Also edits incorrectly charged Ser-tRNA(Ala) and Gly-tRNA(Ala) via its editing domain. This chain is Alanine--tRNA ligase, found in Acidothermus cellulolyticus (strain ATCC 43068 / DSM 8971 / 11B).